Reading from the N-terminus, the 227-residue chain is Lysosomal-associated transmembrane protein 4B (227 aa).

4 helical membrane passes run 26–46, 72–92, 100–120, and 153–173; these read ILLG…LLSA, MCIA…ATYG, WIIP…LVAI, and CLVL…GYLI. The tract at residues 205–222 is required for NEDD4 interaction; the sequence is PPYDDATAVPSTAKEPPP.

The protein belongs to the LAPTM4/LAPTM5 transporter family. Homooligomer; upon reaching the lysosomes. Interacts with MCOLN1. Interacts with NEDD4; may play a role in the lysosomal sorting of LAPTM4B; enhances HGS association with NEDD4; mediates inhibition of EGFR degradation. Interacts with PIP5K1C; promotes SNX5 association with LAPTM4B; kinase activity of PIP5K1C is required; interaction is regulated by phosphatidylinositol 4,5-bisphosphate generated by PIP5K1C. Interacts with HGS; promotes HGS ubiquitination. Interacts with SNX5. Interacts with SLC3A2 and SLC7A5; recruits SLC3A2 and SLC7A5 to lysosomes to promote leucine uptake into these organelles and is required for mTORC1 activation. Interacts with LRRC32; decreases TGFB1 production in regulatory T cells. Interacts with BECN1; competes with EGFR for LAPTM4B binding; regulates EGFR activity. Interacts with EGFR; positively correlates with EGFR activation. In terms of processing, undergoes proteolytic cleavage following delivery to the lysosomes. Post-translationally, ubiquitinated by NEDD4.

It localises to the endomembrane system. It is found in the late endosome membrane. The protein resides in the cell membrane. Its subcellular location is the cell projection. The protein localises to the lysosome membrane. It localises to the endosome membrane. It is found in the endosome. The protein resides in the multivesicular body membrane. Its subcellular location is the multivesicular body lumen. Required for optimal lysosomal function. Blocks EGF-stimulated EGFR intraluminal sorting and degradation. Conversely by binding with the phosphatidylinositol 4,5-bisphosphate, regulates its PIP5K1C interaction, inhibits HGS ubiquitination and relieves LAPTM4B inhibition of EGFR degradation. Recruits SLC3A2 and SLC7A5 (the Leu transporter) to the lysosome, promoting entry of leucine and other essential amino acid (EAA) into the lysosome, stimulating activation of proton-transporting vacuolar (V)-ATPase protein pump (V-ATPase) and hence mTORC1 activation. Plays a role as negative regulator of TGFB1 production in regulatory T cells. Binds ceramide and facilitates its exit from late endosome in order to control cell death pathways. The protein is Lysosomal-associated transmembrane protein 4B of Mus musculus (Mouse).